The sequence spans 209 residues: Dual specificity protein phosphatase 22 (209 aa).

The 141-residue stretch at 4–144 (GMNKILTGLF…LEDFGKCEVH (141 aa)) folds into the Tyrosine-protein phosphatase domain. Catalysis depends on C88, which acts as the Phosphocysteine intermediate. Residues 169 to 192 (LDKHKQQEAAESQNATSSGRQWNS) are disordered. The span at 177 to 190 (AAESQNATSSGRQW) shows a compositional bias: polar residues.

Belongs to the protein-tyrosine phosphatase family. Non-receptor class dual specificity subfamily.

It is found in the cytoplasm. It localises to the nucleus. It carries out the reaction O-phospho-L-tyrosyl-[protein] + H2O = L-tyrosyl-[protein] + phosphate. It catalyses the reaction O-phospho-L-seryl-[protein] + H2O = L-seryl-[protein] + phosphate. The catalysed reaction is O-phospho-L-threonyl-[protein] + H2O = L-threonyl-[protein] + phosphate. Activates the Jnk signaling pathway. Dephosphorylates and deactivates p38 and stress-activated protein kinase/c-Jun N-terminal kinase (SAPK/JNK). In Xenopus laevis (African clawed frog), this protein is Dual specificity protein phosphatase 22 (dusp22).